Consider the following 590-residue polypeptide: Negative elongation factor D (590 aa).

The disordered stretch occupies residues 15–43; the sequence is YGSAAEWGDEADGGQQEDDSGEGEDDAEV. Acidic residues predominate over residues 21 to 43; it reads WGDEADGGQQEDDSGEGEDDAEV.

It belongs to the NELF-D family. In terms of assembly, the NELF complex is composed of NELFA, NELFB, NELFCD and NELFE; NELFA and NELFCD form a stable subcomplex that binds primarily through NELFCD to the N-terminus of NELFB. Binds RNA which may help to stabilize the NELF complex on nucleic acid. In vitro, the NELFA:NELFCD subcomplex binds to ssDNA and ssRNA in a sequence- and structure-dependent manner. Interacts with ARAF1. Interacts with PCF11. Interacts with NELFB. Interacts with KAT8.

Its subcellular location is the nucleus. Essential component of the NELF complex, a complex that negatively regulates the elongation of transcription by RNA polymerase II. The NELF complex, which acts via an association with the DSIF complex and causes transcriptional pausing, is counteracted by the P-TEFb kinase complex. The polypeptide is Negative elongation factor D (NELFCD) (Pongo abelii (Sumatran orangutan)).